Reading from the N-terminus, the 512-residue chain is Pentatricopeptide repeat-containing protein At1g64583, mitochondrial (512 aa).

The transit peptide at 1–34 (MRRLIVTGIATSTAKGFRRVVNPNLLGGGAAARA) directs the protein to the mitochondrion. PPR repeat units lie at residues 70–104 (SIVDFTRLLTATANLRRYETVIYFSQKMELYGISH), 105–139 (DLYSFTILIHCFCRCSRLSFALSVLGKMMKLGYEP), 140–174 (SIVTFGSLLHGFCLVNRIGDAFSLVILMVKSGYEP), 175–209 (NVVVYNTLIDGLCKNGELNIALELLNEMEKKGLGA), 210–244 (DVVTYNTLLTGLCYSGRWSDAARMLRDMMKRSINP), 245–279 (DVVTFTALIDVFVKQGNLDEAQELYKEMIQSSVDP), 280–314 (NNVTYNSIINGLCMHGRLYDAKKTFDLMASKGCFP), 315–349 (NVVTYNTLISGFCKFRMVDEGMKLFQRMSCEGFNA), 350–384 (DIFTYNTLIHGYCQVGKLRVALDIFCWMVSRRVTP), 385–415 (DIITHCILLHGLCVNGEIESALVKFDDMRES), 420–454 (GIVAYNIMIHGLCKADKVEKAWELFCRLPVEGVKP), and 455–489 (DARTYTIMILGLCKNGPRREADELIRRMKEEGIIC).

It belongs to the PPR family. P subfamily.

The protein localises to the mitochondrion. The polypeptide is Pentatricopeptide repeat-containing protein At1g64583, mitochondrial (Arabidopsis thaliana (Mouse-ear cress)).